The chain runs to 440 residues: MKLFGTDGVRGKAGEFLTPFLAMKLAMSFGECLPKKTGKILVGKDTRRSGYMIENALVSGLTAIGYDVIQIGPMPTPAIAFLTEDMRCDGGIMISASHNPYYDNGIKFFDSFGNKLSQEFEEKIEKRYFENNFNLKTEKEIGKSKRIDDVIGRYIVHIKSSFPKHVNLNGMRIVLDTANGAAYKVAPTIFTELGADVITINDEPDGFNINQNAGAMHPEFLAKKVLEYRADIGFALDGDADRLVVVDEKGEIVNGDKLLGALAYYLHKQNKLKNNGVAVTVMSNGALEKFLNDMGIKVYRSNVGDKYVLEVMKEKDLNFGGEQSGHIIFSDYAKTGDGLVSALQAVAYLIQSGKKASEAFDLFELYPQIQANIQVSSKPPLNEIEGAKELLDEVEKEGYRHLVRYSGTENKLRLLVEGESENKAKELLVKLKEFFKSKLS.

The Phosphoserine intermediate role is filled by Ser-97. The Mg(2+) site is built by Ser-97, Asp-237, Asp-239, and Asp-241. The residue at position 97 (Ser-97) is a Phosphoserine.

The protein belongs to the phosphohexose mutase family. Mg(2+) is required as a cofactor. Activated by phosphorylation.

It catalyses the reaction alpha-D-glucosamine 1-phosphate = D-glucosamine 6-phosphate. Its function is as follows. Catalyzes the conversion of glucosamine-6-phosphate to glucosamine-1-phosphate. The sequence is that of Phosphoglucosamine mutase from Nautilia profundicola (strain ATCC BAA-1463 / DSM 18972 / AmH).